A 229-amino-acid chain; its full sequence is MATSSHLLPQALHMIPRTPSFSSKNLGVSSILPRASSVNSRLSVSRVFLNHSSSNFGFAIDSKKRKEFIAKAEESTEGETEAVVENAVETEAEGEGEATVAAEEAKPPWKTRVKLGDIMGLLNKKAIEVAETVRPVPGLRTGDIVEIKLEVPENKRRLSIYKGIVMSRQNAGIHTTIRIRRIIAGIGVEIVFPIYSPNIKEIKVVSHRKVRRARLYYLRDKLPRLSTFK.

The transit peptide at 1–70 (MATSSHLLPQ…DSKKRKEFIA (70 aa)) directs the protein to the chloroplast.

The protein belongs to the bacterial ribosomal protein bL19 family. In terms of assembly, part of the 50S ribosomal subunit.

The protein localises to the plastid. Its subcellular location is the chloroplast. Functionally, located at the 30S-50S ribosomal subunit interface and binds directly to 23S ribosomal RNA. The chain is Large ribosomal subunit protein bL19cy from Arabidopsis thaliana (Mouse-ear cress).